The following is a 509-amino-acid chain: Probable cytochrome P450 513A1 (509 aa).

Residues 2–19 (NYLVGLVLIFTIFYFFLQ) form a helical membrane-spanning segment. Cys-454 contacts heme.

Belongs to the cytochrome P450 family. Heme is required as a cofactor.

It is found in the membrane. In Dictyostelium discoideum (Social amoeba), this protein is Probable cytochrome P450 513A1 (cyp513A1).